The following is an 889-amino-acid chain: Alanine--tRNA ligase (889 aa).

4 residues coordinate Zn(2+): H566, H570, C683, and H687.

The protein belongs to the class-II aminoacyl-tRNA synthetase family. Requires Zn(2+) as cofactor.

The protein resides in the cytoplasm. The catalysed reaction is tRNA(Ala) + L-alanine + ATP = L-alanyl-tRNA(Ala) + AMP + diphosphate. Its function is as follows. Catalyzes the attachment of alanine to tRNA(Ala) in a two-step reaction: alanine is first activated by ATP to form Ala-AMP and then transferred to the acceptor end of tRNA(Ala). Also edits incorrectly charged Ser-tRNA(Ala) and Gly-tRNA(Ala) via its editing domain. The chain is Alanine--tRNA ligase from Herpetosiphon aurantiacus (strain ATCC 23779 / DSM 785 / 114-95).